The following is a 281-amino-acid chain: Pantothenate synthetase (281 aa).

Position 30-37 (30-37) interacts with ATP; the sequence is MGYLHEGH. The active-site Proton donor is the His37. Gln60 contributes to the (R)-pantoate binding site. Gln60 contributes to the beta-alanine binding site. 146–149 contacts ATP; it reads GEKD. Residue Gln152 coordinates (R)-pantoate. ATP contacts are provided by residues Ile175 and 183–186; that span reads KSSR.

The protein belongs to the pantothenate synthetase family. Homodimer.

Its subcellular location is the cytoplasm. It catalyses the reaction (R)-pantoate + beta-alanine + ATP = (R)-pantothenate + AMP + diphosphate + H(+). It participates in cofactor biosynthesis; (R)-pantothenate biosynthesis; (R)-pantothenate from (R)-pantoate and beta-alanine: step 1/1. Its function is as follows. Catalyzes the condensation of pantoate with beta-alanine in an ATP-dependent reaction via a pantoyl-adenylate intermediate. The chain is Pantothenate synthetase from Ruminiclostridium cellulolyticum (strain ATCC 35319 / DSM 5812 / JCM 6584 / H10) (Clostridium cellulolyticum).